A 213-amino-acid chain; its full sequence is CDP-diacylglycerol--inositol 3-phosphatidyltransferase (213 aa).

Topologically, residues 1–5 (MPEEN) are cytoplasmic. A helical membrane pass occupies residues 6 to 26 (IFLFVPNLIGYARIVFAIISF). Tyr-27 is a topological domain (lumenal). A helical membrane pass occupies residues 28-48 (FMPCCPFTASSFYLLSGLLDA). Positions 47 and 50 each coordinate Mg(2+). Residues 49-73 (FDGHAARALNQGTRFGAMLDMLTDR) lie on the Cytoplasmic side of the membrane. A CDP-1,2-diacyl-sn-glycerol contacts are provided by Gly-51, Arg-55, and Thr-61. Positions 68 and 72 each coordinate Mg(2+). The active-site Proton acceptor is Asp-72. Residues 74 to 94 (CATMCLLVNLALLYPRATLLF) traverse the membrane as a helical segment. A topological domain (lumenal) is located at residue Gln-95. Residues 96 to 116 (LSMSLDVASHWLHLHSSVVRG) form a helical membrane-spanning segment. The Cytoplasmic segment spans residues 117–139 (SESHKMIDLSGNPVLRIYYTSRP). A helical membrane pass occupies residues 140 to 160 (ALFTLCAGNELFYCLLYLFNF). Topologically, residues 161-174 (SEGPLVGSVGLFRM) are lumenal. The chain crosses the membrane as a helical span at residues 175–195 (GLWVTAPIALLKSVISVIHLI). Over 196-213 (TAARNMAALDAADRAKKK) the chain is Cytoplasmic.

This sequence belongs to the CDP-alcohol phosphatidyltransferase class-I family. Mn(2+) is required as a cofactor. Mg(2+) serves as cofactor.

The protein resides in the endoplasmic reticulum membrane. Its subcellular location is the cell membrane. The catalysed reaction is a CDP-1,2-diacyl-sn-glycerol + myo-inositol = a 1,2-diacyl-sn-glycero-3-phospho-(1D-myo-inositol) + CMP + H(+). Functionally, catalyzes the biosynthesis of phosphatidylinositol (PtdIns) as well as PtdIns:inositol exchange reaction. May thus act to reduce an excessive cellular PtdIns content. The exchange activity is due to the reverse reaction of PtdIns synthase and is dependent on CMP, which is tightly bound to the enzyme. This Mus musculus (Mouse) protein is CDP-diacylglycerol--inositol 3-phosphatidyltransferase.